Consider the following 212-residue polypeptide: Thymidylate kinase (212 aa).

ATP is bound at residue 10–17; it reads GPEGAGKT.

It belongs to the thymidylate kinase family.

It carries out the reaction dTMP + ATP = dTDP + ADP. Functionally, phosphorylation of dTMP to form dTDP in both de novo and salvage pathways of dTTP synthesis. The polypeptide is Thymidylate kinase (Bacillus pumilus (strain SAFR-032)).